The chain runs to 80 residues: Raniseptin-6 (80 aa).

Residues 1–22 form the signal peptide; that stretch reads MAFLKKSLFLVLFLGIVSLSIC. A propeptide spanning residues 23–49 is cleaved from the precursor; that stretch reads EEEKREGEEEEKQEEENEELSEEELRE.

This sequence belongs to the frog skin active peptide (FSAP) family. Dermaseptin subfamily. As to expression, expressed by the skin glands.

The protein resides in the secreted. Its function is as follows. Has antibacterial activity. The sequence is that of Raniseptin-6 from Boana raniceps (Chaco tree frog).